The sequence spans 524 residues: Probable glutamyl-tRNA reductase 3, chloroplastic (524 aa).

A chloroplast-targeting transit peptide spans 1 to 52 (MAVSNASVVLSPNLETSSSWYHHNPSSSLDLIRIHTLPMNKMTRRGLIQRVR). Substrate contacts are provided by residues 129–132 (TCNR), S189, 194–196 (ENQ), and Q200. C130 (nucleophile) is an active-site residue. Position 269–274 (269–274 (GAGEMG)) interacts with NADP(+).

This sequence belongs to the glutamyl-tRNA reductase family.

It is found in the plastid. It localises to the chloroplast. It catalyses the reaction (S)-4-amino-5-oxopentanoate + tRNA(Glu) + NADP(+) = L-glutamyl-tRNA(Glu) + NADPH + H(+). The protein operates within porphyrin-containing compound metabolism; protoporphyrin-IX biosynthesis; 5-aminolevulinate from L-glutamyl-tRNA(Glu): step 1/2. Its pathway is porphyrin-containing compound metabolism; chlorophyll biosynthesis. In terms of biological role, catalyzes the NADPH-dependent reduction of glutamyl-tRNA(Glu) to glutamate 1-semialdehyde (GSA). The chain is Probable glutamyl-tRNA reductase 3, chloroplastic (HEMA3) from Arabidopsis thaliana (Mouse-ear cress).